Here is a 304-residue protein sequence, read N- to C-terminus: Glutaminase (304 aa).

Substrate is bound by residues Ser-61, Asn-113, Glu-158, Asn-165, Tyr-189, Tyr-240, and Val-258.

It belongs to the glutaminase family. In terms of assembly, homotetramer.

The enzyme catalyses L-glutamine + H2O = L-glutamate + NH4(+). The polypeptide is Glutaminase (Fusobacterium nucleatum subsp. nucleatum (strain ATCC 25586 / DSM 15643 / BCRC 10681 / CIP 101130 / JCM 8532 / KCTC 2640 / LMG 13131 / VPI 4355)).